A 275-amino-acid polypeptide reads, in one-letter code: Glucosamine-6-phosphate deaminase 2 (275 aa).

The active-site Proton acceptor; for enolization step is D72. Positions 103–131 (NAHILDGNASDLQAECEDFERKIKEAGGI) form a coiled coil. The active-site For ring-opening step is D141. Catalysis depends on H143, which acts as the Proton acceptor; for ring-opening step. The active-site For ring-opening step is the E148.

The protein belongs to the glucosamine/galactosamine-6-phosphate isomerase family. Homohexamer.

It is found in the cytoplasm. It carries out the reaction alpha-D-glucosamine 6-phosphate + H2O = beta-D-fructose 6-phosphate + NH4(+). Functionally, catalyzes the reversible conversion of alpha-D-glucosamine 6-phosphate (GlcN-6P) into beta-D-fructose 6-phosphate (Fru-6P) and ammonium ion, a regulatory reaction step in de novo uridine diphosphate-N-acetyl-alpha-D-glucosamine (UDP-GlcNAc) biosynthesis via hexosamine pathway. This chain is Glucosamine-6-phosphate deaminase 2, found in Xenopus tropicalis (Western clawed frog).